A 437-amino-acid chain; its full sequence is UDP-N-acetylmuramate--L-alanine ligase (437 aa).

Residue 108–114 (GAHGKTS) coordinates ATP.

It belongs to the MurCDEF family.

The protein localises to the cytoplasm. The catalysed reaction is UDP-N-acetyl-alpha-D-muramate + L-alanine + ATP = UDP-N-acetyl-alpha-D-muramoyl-L-alanine + ADP + phosphate + H(+). The protein operates within cell wall biogenesis; peptidoglycan biosynthesis. Functionally, cell wall formation. This is UDP-N-acetylmuramate--L-alanine ligase from Staphylococcus carnosus (strain TM300).